The primary structure comprises 195 residues: Imidazoleglycerol-phosphate dehydratase (195 aa).

The protein belongs to the imidazoleglycerol-phosphate dehydratase family.

It localises to the cytoplasm. The enzyme catalyses D-erythro-1-(imidazol-4-yl)glycerol 3-phosphate = 3-(imidazol-4-yl)-2-oxopropyl phosphate + H2O. It functions in the pathway amino-acid biosynthesis; L-histidine biosynthesis; L-histidine from 5-phospho-alpha-D-ribose 1-diphosphate: step 6/9. This Azoarcus sp. (strain BH72) protein is Imidazoleglycerol-phosphate dehydratase.